Reading from the N-terminus, the 130-residue chain is Prefoldin subunit alpha (130 aa).

It belongs to the prefoldin subunit alpha family. As to quaternary structure, heterohexamer of two alpha and four beta subunits.

Its subcellular location is the cytoplasm. Molecular chaperone capable of stabilizing a range of proteins. Seems to fulfill an ATP-independent, HSP70-like function in archaeal de novo protein folding. In Thermoplasma volcanium (strain ATCC 51530 / DSM 4299 / JCM 9571 / NBRC 15438 / GSS1), this protein is Prefoldin subunit alpha.